A 379-amino-acid polypeptide reads, in one-letter code: Dual-specificity RNA methyltransferase RlmN (379 aa).

Glu95 (proton acceptor) is an active-site residue. The region spanning 101 to 345 is the Radical SAM core domain; sequence EETRGTLCVS…TTVRKTRGDD (245 aa). Cysteines 108 and 350 form a disulfide. Residues Cys115, Cys119, and Cys122 each contribute to the [4Fe-4S] cluster site. S-adenosyl-L-methionine contacts are provided by residues 176-177, Ser208, 230-232, and Asn307; these read GE and SLH. Cys350 functions as the S-methylcysteine intermediate in the catalytic mechanism.

This sequence belongs to the radical SAM superfamily. RlmN family. [4Fe-4S] cluster serves as cofactor.

Its subcellular location is the cytoplasm. It carries out the reaction adenosine(2503) in 23S rRNA + 2 reduced [2Fe-2S]-[ferredoxin] + 2 S-adenosyl-L-methionine = 2-methyladenosine(2503) in 23S rRNA + 5'-deoxyadenosine + L-methionine + 2 oxidized [2Fe-2S]-[ferredoxin] + S-adenosyl-L-homocysteine. The enzyme catalyses adenosine(37) in tRNA + 2 reduced [2Fe-2S]-[ferredoxin] + 2 S-adenosyl-L-methionine = 2-methyladenosine(37) in tRNA + 5'-deoxyadenosine + L-methionine + 2 oxidized [2Fe-2S]-[ferredoxin] + S-adenosyl-L-homocysteine. In terms of biological role, specifically methylates position 2 of adenine 2503 in 23S rRNA and position 2 of adenine 37 in tRNAs. m2A2503 modification seems to play a crucial role in the proofreading step occurring at the peptidyl transferase center and thus would serve to optimize ribosomal fidelity. The protein is Dual-specificity RNA methyltransferase RlmN of Burkholderia vietnamiensis (strain G4 / LMG 22486) (Burkholderia cepacia (strain R1808)).